The primary structure comprises 490 residues: 3-octaprenyl-4-hydroxybenzoate carboxy-lyase (490 aa).

Asn172 provides a ligand contact to Mn(2+). Prenylated FMN contacts are provided by residues 175–177 (IYR), 189–191 (RWL), and 194–195 (RG). Glu238 contacts Mn(2+). Asp287 functions as the Proton donor in the catalytic mechanism.

It belongs to the UbiD family. Homohexamer. The cofactor is prenylated FMN. Requires Mn(2+) as cofactor.

It is found in the cell membrane. It carries out the reaction a 4-hydroxy-3-(all-trans-polyprenyl)benzoate + H(+) = a 2-(all-trans-polyprenyl)phenol + CO2. It functions in the pathway cofactor biosynthesis; ubiquinone biosynthesis. In terms of biological role, catalyzes the decarboxylation of 3-octaprenyl-4-hydroxy benzoate to 2-octaprenylphenol, an intermediate step in ubiquinone biosynthesis. In Saccharophagus degradans (strain 2-40 / ATCC 43961 / DSM 17024), this protein is 3-octaprenyl-4-hydroxybenzoate carboxy-lyase.